A 132-amino-acid chain; its full sequence is Auxin-responsive protein SAUR72 (132 aa).

Residues 22 to 54 (SDSQRPSRRSESFLRSSVTRRSKKQTSSVPEGH) form a disordered region. Over residues 23 to 33 (DSQRPSRRSES) the composition is skewed to basic and acidic residues.

The protein belongs to the ARG7 family. As to quaternary structure, interacts with and inhibits PP2C-D subfamily of type 2C phosphatases such as PP2C67/PP2C-D1. Highly expressed in the steles of roots and hypocotyls.

The protein resides in the cytoplasm. Functionally, provide a mechanistic link between auxin and plasma membrane H(+)-ATPases (PM H(+)-ATPases, e.g. AHA1 and AHA2), and triggers PM H(+)-ATPases activity by promoting phosphorylation of their C-terminal autoinhibitory domain as a result of PP2C-D subfamily of type 2C phosphatases inhibition, thus leading to the acidification of the apoplast and the facilitation of solutes and water uptake to drive cell expansion. Plays a role in the regulation of cell expansion, root meristem patterning and auxin transport. This chain is Auxin-responsive protein SAUR72, found in Arabidopsis thaliana (Mouse-ear cress).